The primary structure comprises 201 residues: Probable nicotinate-nucleotide adenylyltransferase (201 aa).

This sequence belongs to the NadD family.

It carries out the reaction nicotinate beta-D-ribonucleotide + ATP + H(+) = deamido-NAD(+) + diphosphate. It functions in the pathway cofactor biosynthesis; NAD(+) biosynthesis; deamido-NAD(+) from nicotinate D-ribonucleotide: step 1/1. Its function is as follows. Catalyzes the reversible adenylation of nicotinate mononucleotide (NaMN) to nicotinic acid adenine dinucleotide (NaAD). The protein is Probable nicotinate-nucleotide adenylyltransferase of Clostridium botulinum (strain Loch Maree / Type A3).